A 24-amino-acid chain; its full sequence is Brevinin-1 (24 aa).

A disulfide bridge links cysteine 18 with cysteine 24.

This sequence belongs to the frog skin active peptide (FSAP) family. Brevinin subfamily. Expressed by the skin glands.

Its subcellular location is the secreted. In terms of biological role, shows antibacterial activity against representative Gram-negative and Gram-positive bacterial species, and a very high hemolytic activity. The sequence is that of Brevinin-1 from Pelophylax porosus brevipodus (Nagoya Daruma pond frog).